Here is a 467-residue protein sequence, read N- to C-terminus: Indoleacetamide hydrolase (467 aa).

Active-site charge relay system residues include Lys-74 and Ser-149. Ser-173 functions as the Acyl-ester intermediate in the catalytic mechanism.

It belongs to the amidase family.

Its pathway is plant hormone metabolism; auxin biosynthesis. Its function is as follows. Hydrolyzes indole-3-acetamide (IAM) into indole-3-acetic acid (IAA). This is Indoleacetamide hydrolase (tms2) from Rhizobium radiobacter (Agrobacterium tumefaciens).